A 321-amino-acid polypeptide reads, in one-letter code: Ribosomal protein L11 methyltransferase (321 aa).

Positions 150, 171, 193, and 256 each coordinate S-adenosyl-L-methionine.

It belongs to the methyltransferase superfamily. PrmA family.

The protein localises to the cytoplasm. The enzyme catalyses L-lysyl-[protein] + 3 S-adenosyl-L-methionine = N(6),N(6),N(6)-trimethyl-L-lysyl-[protein] + 3 S-adenosyl-L-homocysteine + 3 H(+). Methylates ribosomal protein L11. The sequence is that of Ribosomal protein L11 methyltransferase from Herpetosiphon aurantiacus (strain ATCC 23779 / DSM 785 / 114-95).